The sequence spans 987 residues: Ephrin type-B receptor 4a (987 aa).

Positions 1-24 (MELFSRNVAAFWIILLEFLLGSVA) are cleaved as a signal peptide. At 25 to 548 (EEEVLMNTKT…DSSSPLLVTG (524 aa)) the chain is on the extracellular side. The 180-residue stretch at 26–205 (EEVLMNTKTE…FFKKCPALTR (180 aa)) folds into the Eph LBD domain. 2 disulfide bridges follow: cysteine 70/cysteine 187 and cysteine 104/cysteine 114. The tract at residues 319 to 340 (DSADTPCTRPPSSPRSPVPQVN) is disordered. Residues 326-335 (TRPPSSPRSP) are compositionally biased toward pro residues. 2 consecutive Fibronectin type-III domains span residues 328–438 (PPSS…TSPN) and 442–536 (LVSG…TLPD). The helical transmembrane segment at 549–569 (ILIAMGMLLLIIVIGAAIYCI) threads the bilayer. The Cytoplasmic segment spans residues 570–987 (RKQNNYKDPE…QNKAPGNVLY (418 aa)). A Protein kinase domain is found at 621–884 (VKIEEVIGAG…NIVSALDKLI (264 aa)). ATP is bound by residues 627 to 635 (IGAGEFGEV) and lysine 653. The Proton acceptor role is filled by aspartate 746. In terms of domain architecture, SAM spans 914-978 (SSCGTVGDWL…LSSIEALGIQ (65 aa)).

Belongs to the protein kinase superfamily. Tyr protein kinase family. Ephrin receptor subfamily.

The protein localises to the cell membrane. It carries out the reaction L-tyrosyl-[protein] + ATP = O-phospho-L-tyrosyl-[protein] + ADP + H(+). In terms of biological role, receptor tyrosine kinase which binds promiscuously transmembrane ephrin-B family ligands residing on adjacent cells, leading to contact-dependent bidirectional signaling into neighboring cells. The signaling pathway downstream of the receptor is referred to as forward signaling while the signaling pathway downstream of the ephrin ligand is referred to as reverse signaling. Together with its cognate ligand/functional ligand EFNB2 is involved in the regulation of cell adhesion and cell migration, and plays a central role in heart morphogenesis, angiogenesis and blood vessel remodeling and permeability. EPHB4-mediated forward signaling controls cellular repulsion and segregation from EFNB2-expressing cells. Involved in somitogenesis. The protein is Ephrin type-B receptor 4a of Danio rerio (Zebrafish).